A 527-amino-acid polypeptide reads, in one-letter code: Probable glucomannan 4-beta-mannosyltransferase 9 (527 aa).

Residues 37–59 form a helical membrane-spanning segment; that stretch reads AMSVMLFVEKVYMSVVLVGVHLF. Asp131 is a catalytic residue. The substrate site is built by Asp190 and Asp192. Asp284 is a catalytic residue. 4 helical membrane passes run 363-383, 399-419, 478-498, and 505-525; these read IIGH…TVLI, IVTI…IFWV, ALEL…IAYG, and FLFL…GTIV.

This sequence belongs to the glycosyltransferase 2 family. Plant cellulose synthase-like A subfamily.

It is found in the golgi apparatus membrane. The enzyme catalyses GDP-mannose + (glucomannan)n = GDP + (glucomannan)n+1.. Probable mannan synthase which consists of a 4-beta-mannosyltransferase activity on mannan using GDP-mannose. The beta-1,4-mannan product is the backbone for galactomannan synthesis by galactomannan galactosyltransferase. Galactomannan is a noncellulosic polysaccharides of plant cell wall. The polypeptide is Probable glucomannan 4-beta-mannosyltransferase 9 (Oryza sativa subsp. japonica (Rice)).